A 445-amino-acid polypeptide reads, in one-letter code: MSIQIKQSTMVRPAEETPNKSLWLSNIDMILRTPYSHTGAVLIYKQPDNNEDNIHPSSSMYFDANILIEALSKALVPFYPMAGRLKINGDRYEIDCNAEGALFVEAESSHVLEDFGDFRPNDELHRVMVPTCDYSKGISSFPLLMVQLTRFRCGGVSIGFAQHHHVCDGMAHFEFNNSWARIAKGLLPALEPVHDRYLHLRPRNPPQIKYSHSQFEPFVPSLPNELLDGKTNKSQTLFILSREQINTLKQKLDLSNNTTRLSTYEVVAAHVWRSVSKARGLSDHEEIKLIMPVDGRSRINNPSLPKGYCGNVVFLAVCTATVGDLSCNPLTDTAGKVQEALKGLDDDYLRSAIDHTESKPGLPVPYMGSPEKTLYPNVLVNSWGRIPYQAMDFGWGSPTFFGISNIFYDGQCFLIPSRDGDGSMTLAINLFSSHLSRFKKYFYDF.

Active-site proton acceptor residues include His-164 and Asp-392.

Belongs to the plant acyltransferase family. In terms of processing, N-terminus is blocked.

The catalysed reaction is anthranilate + benzoyl-CoA = N-benzoylanthranilate + CoA. The protein operates within phytoalexin biosynthesis; methoxydianthramide B biosynthesis. In terms of biological role, catalyzes the formation of N-benzoylanthranilate, in the course of methoxydianthramide B, a phytoalexin. Phytoalexins are produced in response to infection by parasites, and are essential for the expression of disease resistance. The protein is Anthranilate N-benzoyltransferase protein 1 (HCBT1) of Dianthus caryophyllus (Carnation).